The chain runs to 445 residues: Phosphoglucosamine mutase (445 aa).

Ser102 acts as the Phosphoserine intermediate in catalysis. Mg(2+)-binding residues include Ser102, Asp241, Asp243, and Asp245. Ser102 is modified (phosphoserine).

It belongs to the phosphohexose mutase family. It depends on Mg(2+) as a cofactor. In terms of processing, activated by phosphorylation.

The catalysed reaction is alpha-D-glucosamine 1-phosphate = D-glucosamine 6-phosphate. In terms of biological role, catalyzes the conversion of glucosamine-6-phosphate to glucosamine-1-phosphate. In Salmonella dublin (strain CT_02021853), this protein is Phosphoglucosamine mutase.